The sequence spans 229 residues: Potassium/proton antiporter CemA (229 aa).

A run of 3 helical transmembrane segments spans residues 6 to 26, 107 to 127, and 189 to 209; these read AFIPFFYFTSIVFLPWLISLC, ILHFSTNLISFVILSGYSFWG, and ILSGLVSTFPVILDTIFKYWI.

It belongs to the CemA family.

It localises to the plastid. Its subcellular location is the chloroplast inner membrane. It catalyses the reaction K(+)(in) + H(+)(out) = K(+)(out) + H(+)(in). Functionally, contributes to K(+)/H(+) antiport activity by supporting proton efflux to control proton extrusion and homeostasis in chloroplasts in a light-dependent manner to modulate photosynthesis. Prevents excessive induction of non-photochemical quenching (NPQ) under continuous-light conditions. Indirectly promotes efficient inorganic carbon uptake into chloroplasts. This Arabis hirsuta (Hairy rock-cress) protein is Potassium/proton antiporter CemA.